Here is an 809-residue protein sequence, read N- to C-terminus: LPS-assembly protein LptD (809 aa).

The first 22 residues, 1-22 (MRRALRLLPLPLSIAICLPAMA), serve as a signal peptide directing secretion.

Belongs to the LptD family. Component of the lipopolysaccharide transport and assembly complex. Interacts with LptE and LptA.

Its subcellular location is the cell outer membrane. Its function is as follows. Together with LptE, is involved in the assembly of lipopolysaccharide (LPS) at the surface of the outer membrane. The sequence is that of LPS-assembly protein LptD from Xanthomonas campestris pv. campestris (strain 8004).